Consider the following 66-residue polypeptide: UPF0337 protein spyM18_1212 (66 aa).

The protein belongs to the UPF0337 (CsbD) family.

This is UPF0337 protein spyM18_1212 from Streptococcus pyogenes serotype M18 (strain MGAS8232).